The chain runs to 267 residues: Undecaprenyl-diphosphatase (267 aa).

A run of 8 helical transmembrane segments spans residues 1–21, 39–59, 87–107, 111–131, 149–169, 189–209, 218–238, and 246–266; these read MTYF…FLPI, QGLA…VMYF, WLII…KDFI, LRSA…LWWV, ALFL…RSGI, FLMS…KLAL, FLGT…HFFL, and MTPF…WLAL.

This sequence belongs to the UppP family.

The protein resides in the cell inner membrane. It carries out the reaction di-trans,octa-cis-undecaprenyl diphosphate + H2O = di-trans,octa-cis-undecaprenyl phosphate + phosphate + H(+). Its function is as follows. Catalyzes the dephosphorylation of undecaprenyl diphosphate (UPP). Confers resistance to bacitracin. This Aliivibrio salmonicida (strain LFI1238) (Vibrio salmonicida (strain LFI1238)) protein is Undecaprenyl-diphosphatase.